Reading from the N-terminus, the 940-residue chain is Isoleucine--tRNA ligase (940 aa).

Positions 58–68 (PYANGSIHIGH) match the 'HIGH' region motif. Glu564 lines the L-isoleucyl-5'-AMP pocket. A 'KMSKS' region motif is present at residues 605–609 (KMSKS). Position 608 (Lys608) interacts with ATP. Cys903, Cys906, Cys923, and Cys926 together coordinate Zn(2+).

It belongs to the class-I aminoacyl-tRNA synthetase family. IleS type 1 subfamily. Monomer. Zn(2+) is required as a cofactor.

The protein localises to the cytoplasm. The enzyme catalyses tRNA(Ile) + L-isoleucine + ATP = L-isoleucyl-tRNA(Ile) + AMP + diphosphate. Its function is as follows. Catalyzes the attachment of isoleucine to tRNA(Ile). As IleRS can inadvertently accommodate and process structurally similar amino acids such as valine, to avoid such errors it has two additional distinct tRNA(Ile)-dependent editing activities. One activity is designated as 'pretransfer' editing and involves the hydrolysis of activated Val-AMP. The other activity is designated 'posttransfer' editing and involves deacylation of mischarged Val-tRNA(Ile). This chain is Isoleucine--tRNA ligase, found in Shewanella amazonensis (strain ATCC BAA-1098 / SB2B).